The primary structure comprises 181 residues: Probable RNA 2'-phosphotransferase (181 aa).

This sequence belongs to the KptA/TPT1 family.

Removes the 2'-phosphate from RNA via an intermediate in which the phosphate is ADP-ribosylated by NAD followed by a presumed transesterification to release the RNA and generate ADP-ribose 1''-2''-cyclic phosphate (APPR&gt;P). May function as an ADP-ribosylase. The polypeptide is Probable RNA 2'-phosphotransferase (Acaryochloris marina (strain MBIC 11017)).